The sequence spans 372 residues: Probable leucine aminopeptidase MCYG_03459 (372 aa).

An N-terminal signal peptide occupies residues Met-1–Ala-18. Asn-95 carries N-linked (GlcNAc...) asparagine glycosylation. Positions 175 and 194 each coordinate Zn(2+). Asn-195 and Asn-219 each carry an N-linked (GlcNAc...) asparagine glycan. Zn(2+)-binding residues include Glu-233 and Asp-260. The cysteines at positions 305 and 309 are disulfide-linked. Zn(2+) is bound at residue His-338.

The protein belongs to the peptidase M28 family. M28E subfamily. As to quaternary structure, monomer. Zn(2+) serves as cofactor.

The protein localises to the secreted. Functionally, probable extracellular aminopeptidase which contributes to pathogenicity. The sequence is that of Probable leucine aminopeptidase MCYG_03459 from Arthroderma otae (strain ATCC MYA-4605 / CBS 113480) (Microsporum canis).